A 267-amino-acid polypeptide reads, in one-letter code: Protein TIFY 7 (267 aa).

Positions 113–148 constitute a Tify domain; it reads SSGSSPQLTIFYGGTISVFNDISPDKAQAIMLCAGN. Residues 220–244 carry the Jas motif; sequence PQARKASLARFLEKRKERLMSAMPY. The Nuclear localization signal motif lies at 222–229; that stretch reads ARKASLAR.

This sequence belongs to the TIFY/JAZ family. As to quaternary structure, homo- and heterodimer. Interacts with MYC2, MYC3, MYC4, COI1, AFPH2/NINJA, TIFY10A/JAZ1, TIFY10B/JAZ2, TIFY6B/JAZ3, TIFY5A/JAZ8, TIFY9/JAZ10 and TIFY3A/JAZ11. Interacts with RHD6 and RSL1. Ubiquitinated. Targeted for degradation by the SCF(COI1) E3 ubiquitin ligase-proteasome pathway during jasmonate signaling.

It is found in the nucleus. Repressor of jasmonate responses. Jasmonoyl-isoleucine (JA-Ile) specifically promotes COI1-TIFY7/JAZ9 interaction. Interacts with and suppresses RHD6 and RSL1 transcription factor activities to negatively regulate jasmonate-stimulated root hair development. The sequence is that of Protein TIFY 7 (TIFY7) from Arabidopsis thaliana (Mouse-ear cress).